A 662-amino-acid chain; its full sequence is Junctophilin-1 (662 aa).

Over 1 to 640 the chain is Cytoplasmic; that stretch reads MTGGRFDFDD…EREANSGPNS (640 aa). MORN repeat units follow at residues 14–36, 38–59, 60–82, 106–128, and 129–151; these read YCGG…KGQG, YSGS…SGNT, YQGY…KWMY, YEGT…DGGT, and YQGQ…PYGM. Serine 157, serine 216, and serine 220 each carry phosphoserine. Residues 228-247 are disordered; sequence SKSSISSKRSSVRSDAAMSR. 2 MORN repeats span residues 281 to 303 and 304 to 326; these read YMGE…NGMK and YEGE…DGSK. A compositionally biased stretch (basic and acidic residues) spans 432–443; sequence VDAKENPEEKVP. Residues 432–634 form a disordered region; it reads VDAKENPEEK…DSCPSMEREA (203 aa). A Phosphothreonine modification is found at threonine 448. Serine 452 carries the phosphoserine modification. Residue threonine 461 is modified to Phosphothreonine. Phosphoserine is present on residues serine 465, serine 469, and serine 475. The span at 584 to 599 shows a compositional bias: low complexity; the sequence is KPSPNKWSPPKSVTKP. Residues 600–614 show a composition bias toward basic and acidic residues; sequence VAKESKAEPKAKKSE. Residues 641–661 traverse the membrane as a helical; Anchor for type IV membrane protein segment; the sequence is VMIVLVMLLNIGLAILFVHFL.

This sequence belongs to the junctophilin family.

The protein resides in the cell membrane. The protein localises to the endoplasmic reticulum membrane. It is found in the sarcoplasmic reticulum membrane. Junctophilins contribute to the formation of junctional membrane complexes (JMCs) which link the plasma membrane with the endoplasmic or sarcoplasmic reticulum in excitable cells. Provides a structural foundation for functional cross-talk between the cell surface and intracellular calcium release channels. JPH1 contributes to the construction of the skeletal muscle triad by linking the t-tubule (transverse-tubule) and SR (sarcoplasmic reticulum) membranes. The sequence is that of Junctophilin-1 (JPH1) from Oryctolagus cuniculus (Rabbit).